The sequence spans 419 residues: Gamma-glutamyl phosphate reductase (419 aa).

Belongs to the gamma-glutamyl phosphate reductase family.

Its subcellular location is the cytoplasm. The enzyme catalyses L-glutamate 5-semialdehyde + phosphate + NADP(+) = L-glutamyl 5-phosphate + NADPH + H(+). Its pathway is amino-acid biosynthesis; L-proline biosynthesis; L-glutamate 5-semialdehyde from L-glutamate: step 2/2. Functionally, catalyzes the NADPH-dependent reduction of L-glutamate 5-phosphate into L-glutamate 5-semialdehyde and phosphate. The product spontaneously undergoes cyclization to form 1-pyrroline-5-carboxylate. In Bordetella parapertussis (strain 12822 / ATCC BAA-587 / NCTC 13253), this protein is Gamma-glutamyl phosphate reductase.